Consider the following 189-residue polypeptide: ATP synthase subunit delta (189 aa).

Belongs to the ATPase delta chain family. F-type ATPases have 2 components, F(1) - the catalytic core - and F(0) - the membrane proton channel. F(1) has five subunits: alpha(3), beta(3), gamma(1), delta(1), epsilon(1). F(0) has three main subunits: a(1), b(2) and c(10-14). The alpha and beta chains form an alternating ring which encloses part of the gamma chain. F(1) is attached to F(0) by a central stalk formed by the gamma and epsilon chains, while a peripheral stalk is formed by the delta and b chains.

It localises to the cell inner membrane. F(1)F(0) ATP synthase produces ATP from ADP in the presence of a proton or sodium gradient. F-type ATPases consist of two structural domains, F(1) containing the extramembraneous catalytic core and F(0) containing the membrane proton channel, linked together by a central stalk and a peripheral stalk. During catalysis, ATP synthesis in the catalytic domain of F(1) is coupled via a rotary mechanism of the central stalk subunits to proton translocation. In terms of biological role, this protein is part of the stalk that links CF(0) to CF(1). It either transmits conformational changes from CF(0) to CF(1) or is implicated in proton conduction. This chain is ATP synthase subunit delta, found in Rickettsia bellii (strain OSU 85-389).